We begin with the raw amino-acid sequence, 852 residues long: MQGGGPRGAPIHSPSHGADSGHGLPPAVAPQRRRLTRRPGYMRSTAGSGIGFLSPAVGMPHPSSAGLTGQQSQHSQSKAGQCGLDPGSHCQASLVGKPFLKSSLVPAVASEGHLHPAQRSMRKRPVHFAVHSKNDSRQSERLTGSFKPGDSGFWQELLSSDSFKSLAPSLDAPWNKGSRGLKTVKPLASPALNGPADIASLPGFQDTFTSSFSFIQLSLGAAGERGEAEGCLPSREAEPLHQRPQEMAAEASSSDRPHGDPRHLWTFSLHAAPGLADLAQVTRSSSRQSECGTVSSSSSDTGFSSQDASSAGGRGDQGGGWADAHGWHTLLREWEPMLQDYLLSNRRQLEVTSLILKLQKCQEKVVEDGDYDTAETLRQRLEELEQEKGRLSWALPSQQPALRSFLGYLAAQIQVALHGATQRAGSDDPEAPLEGQLRTTAQDSLPASITRRDWLIREKQRLQKEIEALQARMSALEAKEKRLSQELEEQEVLLRWPGCDLMALVAQMSPGQLQEVSKALGETLTSANQAPFQVEPPETLRSLRERTKSLNLAVRELTAQVCSGEKLCSSLRRRLSDLDTRLPALLEAKMLALSGSCFSTAKELTEEIWALSSEREGLEMFLGRLLALSSRNSRRLGIVKEDHLRCRQDLALQDAAHKTRMKANTVKCMEVLEGQLSSCRCPLLGRVWKADLETCQLLMQSLQLQEAGSSPHAEDEEQVHSTGEAAQTAALAVPRTPHPEEEKSPLQVLQEWDTHSALSPHCAAGPWKEDSHIVSAEVGEKCEAIGVKLLHLEDQLLGAMYSHDEALFQSLQGELQTVKETLQAMILQLQPTKEAGEASASYPTAGAQETEA.

Disordered stretches follow at residues 1 to 86, 236 to 264, and 280 to 320; these read MQGG…GLDP, EAEP…PRHL, and QVTR…QGGG. The interaction with MAP1A stretch occupies residues 1–294; the sequence is MQGGGPRGAP…SSRQSECGTV (294 aa). Residues 65–79 are compositionally biased toward polar residues; that stretch reads AGLTGQQSQHSQSKA. The span at 253–263 shows a compositional bias: basic and acidic residues; the sequence is SSDRPHGDPRH. Residues 288-311 show a composition bias toward low complexity; it reads QSECGTVSSSSSDTGFSSQDASSA. An interaction with TRAF3IP1 region spans residues 295-693; it reads SSSSSDTGFS…LGRVWKADLE (399 aa). Coiled-coil stretches lie at residues 367–397 and 449–496; these read EDGD…ALPS and ITRR…LLRW. The required for localization to punctate cytoplasmic foci stretch occupies residues 437 to 594; it reads LRTTAQDSLP…LLEAKMLALS (158 aa). Residues 443–852 form a necessary and sufficient for interaction with PCNT and localization at the centrosome region; sequence DSLPASITRR…PTAGAQETEA (410 aa). Positions 595–852 are interaction with ATF4 and ATF5; that stretch reads GSCFSTAKEL…PTAGAQETEA (258 aa). Disordered regions lie at residues 706–746 and 833–852; these read EAGS…KSPL and KEAG…ETEA. The tract at residues 728–852 is interaction with NDEL1 and PAFAH1B1; it reads TAALAVPRTP…PTAGAQETEA (125 aa). Residues 728–852 are interaction with PAFAH1B1; the sequence is TAALAVPRTP…PTAGAQETEA (125 aa). The interaction with NDEL1 stretch occupies residues 802-835; that stretch reads SHDEALFQSLQGELQTVKETLQAMILQLQPTKEA.

In terms of assembly, interacts with NDEL1. Interacts with CCDC88A (via C-terminus); the interaction is direct. Interacts with GSK3B. Interacts with tubulin alpha, ACTN2, ANKHD1, ATF4, ATF5, CEP63, EIF3S3, MAP1A, NDEL1, PAFAH1B1, RANBP9, SPTBN4, SYNE1 and TRAF3IP1. Interaction with microtubules may be mediated in part by TRAF3IP1. Interacts (via C-terminal) with PCNT. Interacts with CHCHD6. Interacts with CCDC141. Interacts with FBXW7, the substrate-recognition component of a SCF (SKP1-CUL1-F-box protein) E3 ubiquitin-protein ligase complex; the interaction targets DISC1 for proteasomal degradation. Interacts with ZNF365. Interacts with ATF4; inhibiting ATF4 transcription factor activity by disrupting ATF4 dimerization and DNA-binding. Interacts with PDE4B. In terms of processing, ubiquitinated. Ubiquitination with 'Lys-48'-linked polyubiquitin chains leads to its proteasomal degradation. In terms of tissue distribution, expressed in granule cell precursors within the dentate migratory stream during the first week of postnatal life and in differentiated granule cells of the hippocampus (at protein level). Detected in heart, brain, kidney, and testis. Expressed in dentate gyrus, hippocampus and in the olfactory bulb.

The protein resides in the cytoplasm. The protein localises to the cytoskeleton. It is found in the mitochondrion. Its subcellular location is the microtubule organizing center. It localises to the centrosome. The protein resides in the postsynaptic density. Its function is as follows. Involved in the regulation of multiple aspects of embryonic and adult neurogenesis. Required for neural progenitor proliferation in the ventrical/subventrical zone during embryonic brain development and in the adult dentate gyrus of the hippocampus. Participates in the Wnt-mediated neural progenitor proliferation as a positive regulator by modulating GSK3B activity and CTNNB1 abundance. Plays a role as a modulator of the AKT-mTOR signaling pathway controlling the tempo of the process of newborn neurons integration during adult neurogenesis, including neuron positioning, dendritic development and synapse formation. Inhibits the activation of AKT-mTOR signaling upon interaction with CCDC88A. Regulates the migration of early-born granule cell precursors toward the dentate gyrus during the hippocampal development. Inhibits ATF4 transcription factor activity in neurons by disrupting ATF4 dimerization and DNA-binding. Plays a role, together with PCNT, in the microtubule network formation. The sequence is that of Disrupted in schizophrenia 1 homolog from Mus musculus (Mouse).